A 214-amino-acid polypeptide reads, in one-letter code: Fruiting body protein SC14 (214 aa).

The signal sequence occupies residues 1 to 18; the sequence is MKLNIAILLAALAATASA. Residues Asn-61 and Asn-144 are each glycosylated (N-linked (GlcNAc...) asparagine). In terms of domain architecture, SCP spans 72-195; that stretch reads LTAHNDERAQ…KSLWYYVCNY (124 aa).

This sequence belongs to the CRISP family.

The protein resides in the secreted. The protein is Fruiting body protein SC14 (SC14) of Schizophyllum commune (Split gill fungus).